The following is a 270-amino-acid chain: Elongation factor Tu (270 aa).

The 103-residue stretch at 1-103 folds into the tr-type G domain; that stretch reads GILVVSAADG…AVDDYIPTPE (103 aa). 35-38 is a binding site for GTP; sequence NKVD.

This sequence belongs to the TRAFAC class translation factor GTPase superfamily. Classic translation factor GTPase family. EF-Tu/EF-1A subfamily. As to quaternary structure, monomer.

It localises to the cytoplasm. It catalyses the reaction GTP + H2O = GDP + phosphate + H(+). In terms of biological role, GTP hydrolase that promotes the GTP-dependent binding of aminoacyl-tRNA to the A-site of ribosomes during protein biosynthesis. In Staphylococcus warneri, this protein is Elongation factor Tu (tuf).